A 571-amino-acid chain; its full sequence is Urease subunit alpha (571 aa).

The Urease domain occupies 133 to 571; sequence GGVDSHIHFI…LPLAQRYFLF (439 aa). Residues histidine 138, histidine 140, and lysine 221 each contribute to the Ni(2+) site. Lysine 221 carries the N6-carboxylysine modification. Histidine 223 lines the substrate pocket. Residues histidine 250 and histidine 276 each contribute to the Ni(2+) site. Residue histidine 324 is the Proton donor of the active site. Residue aspartate 364 participates in Ni(2+) binding.

The protein belongs to the metallo-dependent hydrolases superfamily. Urease alpha subunit family. Heterotrimer of UreA (gamma), UreB (beta) and UreC (alpha) subunits. Three heterotrimers associate to form the active enzyme. Ni cation serves as cofactor. Carboxylation allows a single lysine to coordinate two nickel ions.

The protein localises to the cytoplasm. It carries out the reaction urea + 2 H2O + H(+) = hydrogencarbonate + 2 NH4(+). It functions in the pathway nitrogen metabolism; urea degradation; CO(2) and NH(3) from urea (urease route): step 1/1. This Anaeromyxobacter sp. (strain Fw109-5) protein is Urease subunit alpha.